The following is a 263-amino-acid chain: MSDILREICDTTRAEVARRKAALPLADVTARAEDANAPRGFANALTRTADSGRPALIAEIKKASPSAGLIRPDFNPAVLARAYHAAGATCLSVLTDGPYFQGHADFLIAARAAVPLPVLRKDFMVDPWQVVEARAMGADCILVILAALDDGAAAEIEACAHDWGMDVLAEVHNEEECARALTCLTTPLLGVNNRNLKTLVTDLAVTERLAKMVPADRVLVAESGLRTRKDLDRMTAVGARRFLIGEHFMRQPDVGDAVRALIG.

This sequence belongs to the TrpC family.

It catalyses the reaction 1-(2-carboxyphenylamino)-1-deoxy-D-ribulose 5-phosphate + H(+) = (1S,2R)-1-C-(indol-3-yl)glycerol 3-phosphate + CO2 + H2O. The protein operates within amino-acid biosynthesis; L-tryptophan biosynthesis; L-tryptophan from chorismate: step 4/5. In Rhodospirillum rubrum (strain ATCC 11170 / ATH 1.1.1 / DSM 467 / LMG 4362 / NCIMB 8255 / S1), this protein is Indole-3-glycerol phosphate synthase.